A 109-amino-acid chain; its full sequence is Large ribosomal subunit protein uL22 (109 aa).

The protein belongs to the universal ribosomal protein uL22 family. In terms of assembly, part of the 50S ribosomal subunit.

In terms of biological role, this protein binds specifically to 23S rRNA; its binding is stimulated by other ribosomal proteins, e.g. L4, L17, and L20. It is important during the early stages of 50S assembly. It makes multiple contacts with different domains of the 23S rRNA in the assembled 50S subunit and ribosome. The globular domain of the protein is located near the polypeptide exit tunnel on the outside of the subunit, while an extended beta-hairpin is found that lines the wall of the exit tunnel in the center of the 70S ribosome. The polypeptide is Large ribosomal subunit protein uL22 (Dehalococcoides mccartyi (strain ATCC BAA-2266 / KCTC 15142 / 195) (Dehalococcoides ethenogenes (strain 195))).